Consider the following 874-residue polypeptide: Alanine--tRNA ligase (874 aa).

His562, His566, Cys664, and His668 together coordinate Zn(2+).

It belongs to the class-II aminoacyl-tRNA synthetase family. The cofactor is Zn(2+).

The protein resides in the cytoplasm. It catalyses the reaction tRNA(Ala) + L-alanine + ATP = L-alanyl-tRNA(Ala) + AMP + diphosphate. In terms of biological role, catalyzes the attachment of alanine to tRNA(Ala) in a two-step reaction: alanine is first activated by ATP to form Ala-AMP and then transferred to the acceptor end of tRNA(Ala). Also edits incorrectly charged Ser-tRNA(Ala) and Gly-tRNA(Ala) via its editing domain. The protein is Alanine--tRNA ligase of Neisseria meningitidis serogroup B (strain ATCC BAA-335 / MC58).